A 210-amino-acid chain; its full sequence is Redox-sensing transcriptional repressor Rex (210 aa).

A DNA-binding region (H-T-H motif) is located at residues 16–55; the sequence is VYSRHLTDVDRKGIVTISSGDIAEGVGVSPAQVRKDLAYF. Residue 90–95 coordinates NAD(+); that stretch reads GMGNLG.

It belongs to the transcriptional regulatory Rex family. Homodimer.

The protein localises to the cytoplasm. In terms of biological role, modulates transcription in response to changes in cellular NADH/NAD(+) redox state. The chain is Redox-sensing transcriptional repressor Rex from Desulfitobacterium hafniense (strain DSM 10664 / DCB-2).